The chain runs to 597 residues: Aspartate--tRNA(Asp/Asn) ligase (597 aa).

Glutamate 170 contacts L-aspartate. Residues 194–197 are aspartate; the sequence is QLFK. Residue arginine 216 participates in L-aspartate binding. ATP-binding positions include 216 to 218 and glutamine 225; that span reads RDE. Histidine 448 contacts L-aspartate. Glutamate 482 lines the ATP pocket. Arginine 489 contributes to the L-aspartate binding site. 534–537 contacts ATP; that stretch reads GWDR. A disordered region spans residues 558 to 597; the sequence is GGGVDPLTDAPAPITAAQRKESGIDAKPEKAEKAGKPADA. Positions 575-597 are enriched in basic and acidic residues; sequence QRKESGIDAKPEKAEKAGKPADA.

The protein belongs to the class-II aminoacyl-tRNA synthetase family. Type 1 subfamily. As to quaternary structure, homodimer.

Its subcellular location is the cytoplasm. It catalyses the reaction tRNA(Asx) + L-aspartate + ATP = L-aspartyl-tRNA(Asx) + AMP + diphosphate. Aspartyl-tRNA synthetase with relaxed tRNA specificity since it is able to aspartylate not only its cognate tRNA(Asp) but also tRNA(Asn). Reaction proceeds in two steps: L-aspartate is first activated by ATP to form Asp-AMP and then transferred to the acceptor end of tRNA(Asp/Asn). The polypeptide is Aspartate--tRNA(Asp/Asn) ligase (Mycobacteroides abscessus (strain ATCC 19977 / DSM 44196 / CCUG 20993 / CIP 104536 / JCM 13569 / NCTC 13031 / TMC 1543 / L948) (Mycobacterium abscessus)).